The following is a 477-amino-acid chain: 3-isopropylmalate dehydratase large subunit (477 aa).

Residues Cys-352, Cys-413, and Cys-416 each coordinate [4Fe-4S] cluster.

It belongs to the aconitase/IPM isomerase family. LeuC type 1 subfamily. Heterodimer of LeuC and LeuD. It depends on [4Fe-4S] cluster as a cofactor.

The enzyme catalyses (2R,3S)-3-isopropylmalate = (2S)-2-isopropylmalate. The protein operates within amino-acid biosynthesis; L-leucine biosynthesis; L-leucine from 3-methyl-2-oxobutanoate: step 2/4. Catalyzes the isomerization between 2-isopropylmalate and 3-isopropylmalate, via the formation of 2-isopropylmaleate. This is 3-isopropylmalate dehydratase large subunit from Pseudomonas entomophila (strain L48).